Reading from the N-terminus, the 202-residue chain is Small ribosomal subunit protein uS4 (202 aa).

The tract at residues 22-43 (TRKSARRAYPPGQHGQNRKKRS) is disordered. Residues 90-152 (MRLDNTVFRL…APSRKLVENN (63 aa)) form the S4 RNA-binding domain.

It belongs to the universal ribosomal protein uS4 family. Part of the 30S ribosomal subunit. Contacts protein S5. The interaction surface between S4 and S5 is involved in control of translational fidelity.

Its function is as follows. One of the primary rRNA binding proteins, it binds directly to 16S rRNA where it nucleates assembly of the body of the 30S subunit. In terms of biological role, with S5 and S12 plays an important role in translational accuracy. The protein is Small ribosomal subunit protein uS4 of Nostoc sp. (strain PCC 7120 / SAG 25.82 / UTEX 2576).